A 204-amino-acid chain; its full sequence is Large ribosomal subunit protein bL25 (204 aa).

It belongs to the bacterial ribosomal protein bL25 family. CTC subfamily. Part of the 50S ribosomal subunit; part of the 5S rRNA/L5/L18/L25 subcomplex. Contacts the 5S rRNA. Binds to the 5S rRNA independently of L5 and L18.

In terms of biological role, this is one of the proteins that binds to the 5S RNA in the ribosome where it forms part of the central protuberance. The polypeptide is Large ribosomal subunit protein bL25 (Pseudomonas aeruginosa (strain LESB58)).